The following is a 513-amino-acid chain: Fructose import ATP-binding protein FruK (513 aa).

2 ABC transporter domains span residues 8–244 (VVMK…IGKS) and 262–505 (PGEK…IANT). An ATP-binding site is contributed by 40–47 (GENGAGKS).

This sequence belongs to the ABC transporter superfamily. In terms of assembly, the complex is composed of an ATP-binding protein (FruK), two transmembrane proteins (FruF and FruG) and a solute-binding protein (FruE).

It is found in the cell membrane. It catalyses the reaction D-fructose(out) + ATP + H2O = D-fructose(in) + ADP + phosphate + H(+). Part of the high-affinity ABC transporter complex FruEKFG involved in fructose uptake. Can also transport ribose and xylose, with lower affinity. Probably responsible for energy coupling to the transport system. The protein is Fructose import ATP-binding protein FruK of Bifidobacterium longum (strain NCC 2705).